The sequence spans 255 residues: Phosphate import ATP-binding protein PstB (255 aa).

The 243-residue stretch at 8–250 (IKSSNLNVHY…PGNKMTQDYI (243 aa)) folds into the ABC transporter domain. An ATP-binding site is contributed by 40-47 (GPSGCGKS).

This sequence belongs to the ABC transporter superfamily. Phosphate importer (TC 3.A.1.7) family. As to quaternary structure, the complex is composed of two ATP-binding proteins (PstB), two transmembrane proteins (PstC and PstA) and a solute-binding protein (PstS).

The protein localises to the cell inner membrane. The enzyme catalyses phosphate(out) + ATP + H2O = ADP + 2 phosphate(in) + H(+). Functionally, part of the ABC transporter complex PstSACB involved in phosphate import. Responsible for energy coupling to the transport system. The protein is Phosphate import ATP-binding protein PstB of Pelagibacter ubique (strain HTCC1062).